Here is a 260-residue protein sequence, read N- to C-terminus: Small ribosomal subunit protein eS1 (260 aa).

Residues 1 to 18 are compositionally biased toward basic residues; sequence MAVGKNKRMSKGKKGGKK. The tract at residues 1-20 is disordered; sequence MAVGKNKRMSKGKKGGKKKA.

Belongs to the eukaryotic ribosomal protein eS1 family. As to quaternary structure, component of the small ribosomal subunit. Mature ribosomes consist of a small (40S) and a large (60S) subunit. The 40S subunit contains about 33 different proteins and 1 molecule of RNA (18S). The 60S subunit contains about 49 different proteins and 3 molecules of RNA (25S, 5.8S and 5S).

The protein resides in the cytoplasm. In Ostreococcus lucimarinus (strain CCE9901), this protein is Small ribosomal subunit protein eS1.